The following is a 139-amino-acid chain: Large ribosomal subunit protein uL16 (139 aa).

The span at 1-20 (MLIPKRTKYRKQHRPVRRGM) shows a compositional bias: basic residues. Residues 1 to 21 (MLIPKRTKYRKQHRPVRRGMS) form a disordered region.

The protein belongs to the universal ribosomal protein uL16 family. As to quaternary structure, part of the 50S ribosomal subunit.

In terms of biological role, binds 23S rRNA and is also seen to make contacts with the A and possibly P site tRNAs. This is Large ribosomal subunit protein uL16 from Bifidobacterium adolescentis (strain ATCC 15703 / DSM 20083 / NCTC 11814 / E194a).